A 593-amino-acid chain; its full sequence is Inactive metallocarboxypeptidase ECM14 (593 aa).

Residues 1 to 22 form the signal peptide; sequence MHFSVRLSLLLTLASSLPLVSA. The propeptide occupies 23–184; it reads IPQHEDQAYT…QTIYESYPKT (162 aa). A disordered region spans residues 180–210; that stretch reads SYPKTNPSSPSQQGPTTRRFSPSASTSKTKP. The segment covering 182-210 has biased composition (polar residues); that stretch reads PKTNPSSPSQQGPTTRRFSPSASTSKTKP. A Peptidase M14 domain is found at 220–546; it reads DYQPLSVLLP…RAMVAMGKFL (327 aa). Positions 285 and 288 each coordinate Zn(2+). Substrate contacts are provided by residues 285–288, R343, and 360–361; these read HARE and DH. C354 and C377 are joined by a disulfide. N-linked (GlcNAc...) asparagine glycosylation occurs at N370. Zn(2+) is bound at residue H417. 418–419 is a binding site for substrate; sequence SY. The segment at 557–593 is disordered; that stretch reads NGPHAAEETQNYDDDFEEDEAEEDSDVFRAQGDDMSS. Over residues 566–581 the composition is skewed to acidic residues; that stretch reads QNYDDDFEEDEAEEDS.

Belongs to the peptidase M14 family. Requires Zn(2+) as cofactor.

The protein localises to the vacuole. It localises to the secreted. Its function is as follows. Inactive carboxypeptidase that may play a role in cell wall organization and biogenesis. In Arthroderma gypseum (strain ATCC MYA-4604 / CBS 118893) (Microsporum gypseum), this protein is Inactive metallocarboxypeptidase ECM14 (ECM14).